The following is a 195-amino-acid chain: 3-isopropylmalate dehydratase small subunit (195 aa).

Belongs to the LeuD family. LeuD type 1 subfamily. In terms of assembly, heterodimer of LeuC and LeuD.

It catalyses the reaction (2R,3S)-3-isopropylmalate = (2S)-2-isopropylmalate. It participates in amino-acid biosynthesis; L-leucine biosynthesis; L-leucine from 3-methyl-2-oxobutanoate: step 2/4. In terms of biological role, catalyzes the isomerization between 2-isopropylmalate and 3-isopropylmalate, via the formation of 2-isopropylmaleate. The polypeptide is 3-isopropylmalate dehydratase small subunit (Oenococcus oeni (strain ATCC BAA-331 / PSU-1)).